The primary structure comprises 427 residues: Light-independent protochlorophyllide reductase subunit N (427 aa).

3 residues coordinate [4Fe-4S] cluster: Cys-30, Cys-55, and Cys-116.

Belongs to the BchN/ChlN family. In terms of assembly, protochlorophyllide reductase is composed of three subunits; BchL, BchN and BchB. Forms a heterotetramer of two BchB and two BchN subunits. [4Fe-4S] cluster is required as a cofactor.

The catalysed reaction is chlorophyllide a + oxidized 2[4Fe-4S]-[ferredoxin] + 2 ADP + 2 phosphate = protochlorophyllide a + reduced 2[4Fe-4S]-[ferredoxin] + 2 ATP + 2 H2O. It functions in the pathway porphyrin-containing compound metabolism; bacteriochlorophyll biosynthesis (light-independent). Component of the dark-operative protochlorophyllide reductase (DPOR) that uses Mg-ATP and reduced ferredoxin to reduce ring D of protochlorophyllide (Pchlide) to form chlorophyllide a (Chlide). This reaction is light-independent. The NB-protein (BchN-BchB) is the catalytic component of the complex. This Rhodopseudomonas palustris (strain BisA53) protein is Light-independent protochlorophyllide reductase subunit N.